A 1425-amino-acid polypeptide reads, in one-letter code: Protein NAP1 (1425 aa).

Composition is skewed to polar residues over residues 1 to 20 (MANS…PTSV), 1299 to 1312 (TPLS…SPSV), and 1320 to 1329 (SMKNSTTPQR). Disordered regions lie at residues 1-24 (MANS…RSRE) and 1299-1425 (TPLS…KQHN). Residues 1362-1405 (SETGNSRNNENNNNNKQRGSSRRSGPLDYSSSHKGGSGSNSTGP) show a composition bias toward low complexity.

It belongs to the HEM-1/HEM-2 family. In terms of assembly, binds PIR. As to expression, expressed in roots, root hairs, hypocotyls, cotyledons, stems, leaves, trichomes, and flowers.

In terms of biological role, involved in regulation of actin and microtubule organization. Part of a WAVE complex that activates the Arp2/3 complex. The protein is Protein NAP1 (NAP1) of Arabidopsis thaliana (Mouse-ear cress).